We begin with the raw amino-acid sequence, 502 residues long: Aspartyl/glutamyl-tRNA(Asn/Gln) amidotransferase subunit B (502 aa).

A disordered region spans residues 272 to 293 (TRHWHEDTRSTTSGRPKSDADD).

This sequence belongs to the GatB/GatE family. GatB subfamily. Heterotrimer of A, B and C subunits.

The catalysed reaction is L-glutamyl-tRNA(Gln) + L-glutamine + ATP + H2O = L-glutaminyl-tRNA(Gln) + L-glutamate + ADP + phosphate + H(+). It catalyses the reaction L-aspartyl-tRNA(Asn) + L-glutamine + ATP + H2O = L-asparaginyl-tRNA(Asn) + L-glutamate + ADP + phosphate + 2 H(+). Functionally, allows the formation of correctly charged Asn-tRNA(Asn) or Gln-tRNA(Gln) through the transamidation of misacylated Asp-tRNA(Asn) or Glu-tRNA(Gln) in organisms which lack either or both of asparaginyl-tRNA or glutaminyl-tRNA synthetases. The reaction takes place in the presence of glutamine and ATP through an activated phospho-Asp-tRNA(Asn) or phospho-Glu-tRNA(Gln). The sequence is that of Aspartyl/glutamyl-tRNA(Asn/Gln) amidotransferase subunit B from Paenarthrobacter aurescens (strain TC1).